A 184-amino-acid chain; its full sequence is Photosystem I assembly protein Ycf4 (184 aa).

Transmembrane regions (helical) follow at residues Ile19–Gly39 and Ile57–Ser77.

Belongs to the Ycf4 family.

Its subcellular location is the plastid. The protein localises to the chloroplast thylakoid membrane. Functionally, seems to be required for the assembly of the photosystem I complex. This is Photosystem I assembly protein Ycf4 from Nymphaea alba (White water-lily).